The sequence spans 424 residues: MLDIKLIRKAPEECETRLRKKDPLISLQPILDLDKEIRHLKTETEALQSQRKLLSNQIHKAKAQGEDVSSMMDNVERISQDLAKLEPLLEQKESTLQDMLVRLPNYPDEDVPVCPDKTGNQVIKQVGALPTFSFTPKHHVELNQKLQILDFKLPAKTSGSGWPAYKNQGVCLEWALLTYLLNKQREHGFQLWLPPLLVKHEILFGSGQIPKFDGQYYRVEDGEQSLYLIPTAEVVLNGFHSQEIFSEKDLPIYYAAFTPCFRREAGAAGAHERGLVRVHQFHKVEMFAFTTPDQADQAYEKMLAVVEDILTELQLPYRLSLLSTGDMSFTASKTIDAEVWLPGQQSYYEVSSISQCTDFQSRRSETRYKDNRGKMHFVHTLNGSGLATPRLFVAILENNQQEDGSVIIPEVLRPYLENQEVLLP.

231–233 provides a ligand contact to L-serine; sequence TAE. ATP contacts are provided by residues 262–264 and V278; that span reads RRE. Residue E285 participates in L-serine binding. Residue 349–352 coordinates ATP; sequence EVSS. L-serine is bound at residue S384.

The protein belongs to the class-II aminoacyl-tRNA synthetase family. Type-1 seryl-tRNA synthetase subfamily. Homodimer. The tRNA molecule binds across the dimer.

Its subcellular location is the cytoplasm. It carries out the reaction tRNA(Ser) + L-serine + ATP = L-seryl-tRNA(Ser) + AMP + diphosphate + H(+). The catalysed reaction is tRNA(Sec) + L-serine + ATP = L-seryl-tRNA(Sec) + AMP + diphosphate + H(+). The protein operates within aminoacyl-tRNA biosynthesis; selenocysteinyl-tRNA(Sec) biosynthesis; L-seryl-tRNA(Sec) from L-serine and tRNA(Sec): step 1/1. In terms of biological role, catalyzes the attachment of serine to tRNA(Ser). Is also able to aminoacylate tRNA(Sec) with serine, to form the misacylated tRNA L-seryl-tRNA(Sec), which will be further converted into selenocysteinyl-tRNA(Sec). The polypeptide is Serine--tRNA ligase (Chlamydia abortus (strain DSM 27085 / S26/3) (Chlamydophila abortus)).